The following is a 1651-amino-acid chain: Roundabout homolog 1 (1651 aa).

An N-terminal signal peptide occupies residues 1–25 (MKWKHVPFLVMISLLSLSPNHLFLA). At 26 to 897 (QLIPDPEDVE…QQISDVVKQP (872 aa)) the chain is on the extracellular side. Residues 33-57 (DVERGNDHGTPIPTSDNDDNSLGYT) form a disordered region. Over residues 44–56 (IPTSDNDDNSLGY) the composition is skewed to polar residues. Ig-like C2-type domains follow at residues 68 to 164 (PRIV…ASLE), 170 to 257 (DDFR…AELT), 262 to 346 (PSFV…ATLT), 351 to 446 (PHFV…LEVT), and 455 to 541 (PVIR…AYIE). C89 and C147 form a disulfide bridge. The N-linked (GlcNAc...) asparagine glycan is linked to N160. 3 disulfide bridges follow: C191–C240, C283–C330, and C372–C428. N463 is a glycosylation site (N-linked (GlcNAc...) asparagine). A disulfide bridge links C476 with C525. 3 consecutive Fibronectin type-III domains span residues 563–657 (APSK…TQDV), 676–773 (AVLH…TLEE), and 778–874 (PPQG…LDAH). Residues N790, N820, and N827 are each glycosylated (N-linked (GlcNAc...) asparagine). The helical transmembrane segment at 898–918 (AFIAGIGAACWIILMVFSIWL) threads the bilayer. The Cytoplasmic segment spans residues 919 to 1651 (YRHRKKRNGL…NNEELEETES (733 aa)). A Phosphoserine modification is found at S940. The residue at position 948 (T948) is a Phosphothreonine. Position 1038 is a phosphotyrosine; by ABL; in vitro (Y1038). S1055 carries the phosphoserine modification. 2 positions are modified to phosphotyrosine; by ABL; in vitro: Y1073 and Y1114. Disordered regions lie at residues 1124–1202 (KDYR…SEEY), 1224–1337 (YLQQ…ADME), 1352–1397 (EQTP…DGSF), and 1420–1651 (RRQM…ETES). Positions 1137–1146 (PYNQSYDQNT) are enriched in polar residues. Residues 1147–1163 (GGSYNSSDRGSSTSGSQ) are compositionally biased toward low complexity. Residues 1186–1196 (LPPPPAHPPPH) show a composition bias toward pro residues. T1240 is modified (phosphothreonine). Residues 1255 to 1269 (YSHQSTATLTPSPQE) show a composition bias toward polar residues. Residues 1281–1293 (ETGHMQHQPDRRR) show a composition bias toward basic and acidic residues. The segment covering 1296-1307 (VSPPPPPRPISP) has biased composition (pro residues). At S1297 the chain carries Phosphoserine. Residues 1322–1336 (MDTDAPEEEEDEADM) are compositionally biased toward acidic residues. The span at 1384–1397 (SSGRSSVSSSDGSF) shows a compositional bias: low complexity. The segment covering 1438–1451 (PRPTSPVSTDSNMS) has biased composition (polar residues). Over residues 1459–1470 (RPAKKLKHQPGH) the composition is skewed to basic residues. The segment covering 1480–1490 (LPPPPVPPPAI) has biased composition (pro residues). Composition is skewed to basic and acidic residues over residues 1516–1541 (ARTD…RQVV) and 1549–1573 (DPRE…RDLP). Residues 1592–1601 (FPTSNNPRDP) show a composition bias toward polar residues. The segment covering 1602–1614 (SSSSSMSSRGSGS) has biased composition (low complexity). Over residues 1642–1651 (NNEELEETES) the composition is skewed to acidic residues.

It belongs to the immunoglobulin superfamily. ROBO family. In terms of assembly, homodimer. Dimerization is mediated by the extracellular domain and is independent of SLIT liganding. Interacts with SLIT1. Interacts with SLIT2. Interacts with FLRT3. Interacts with MYO9B (via Rho-GAP domain). Ubiquitinated. May be deubiquitinated by USP33. In terms of tissue distribution, widely expressed, with exception of kidney.

It localises to the cell membrane. Its subcellular location is the cell projection. The protein localises to the axon. It is found in the endoplasmic reticulum-Golgi intermediate compartment membrane. Receptor for SLIT1 and SLIT2 that mediates cellular responses to molecular guidance cues in cellular migration, including axonal navigation at the ventral midline of the neural tube and projection of axons to different regions during neuronal development. Interaction with the intracellular domain of FLRT3 mediates axon attraction towards cells expressing NTN1. In axon growth cones, the silencing of the attractive effect of NTN1 by SLIT2 may require the formation of a ROBO1-DCC complex. Plays a role in the regulation of cell migration via its interaction with MYO9B; inhibits MYO9B-mediated stimulation of RHOA GTPase activity, and thereby leads to increased levels of active, GTP-bound RHOA. May be required for lung development. This chain is Roundabout homolog 1 (ROBO1), found in Homo sapiens (Human).